The following is a 509-amino-acid chain: Maturase K (509 aa).

This sequence belongs to the intron maturase 2 family. MatK subfamily.

The protein resides in the plastid. The protein localises to the chloroplast. Its function is as follows. Usually encoded in the trnK tRNA gene intron. Probably assists in splicing its own and other chloroplast group II introns. The protein is Maturase K of Abies firma (Momi fir).